The following is a 391-amino-acid chain: Decapping nuclease RAI1 (391 aa).

A divalent metal cation is bound at residue glutamate 174. A substrate-binding site is contributed by glutamate 223. Residues aspartate 225, glutamate 244, and leucine 245 each coordinate a divalent metal cation. Lysine 246 and glutamine 270 together coordinate substrate.

The protein belongs to the DXO/Dom3Z family. In terms of assembly, interacts with RAT1; the interaction is direct, stabilizes RAT1 protein structure and stimulates its exoribonuclease activity. The interaction also stimulates RAI1 pyrophosphohydrolase activity, probably by recruiting it to mRNA substrates. A divalent metal cation serves as cofactor.

It localises to the nucleus. It carries out the reaction a 5'-end NAD(+)-phospho-ribonucleoside in mRNA + H2O = a 5'-end phospho-ribonucleoside in mRNA + NAD(+) + H(+). The catalysed reaction is a 5'-end (N(7)-methyl 5'-triphosphoguanosine)-ribonucleoside-ribonucleotide in mRNA + H2O = a (N(7)-methyl 5'-triphosphoguanosine)-nucleoside + a 5'-end phospho-ribonucleoside in mRNA + H(+). It catalyses the reaction a 5'-end triphospho-ribonucleoside in mRNA + H2O = a 5'-end phospho-ribonucleoside in mRNA + diphosphate + H(+). In terms of biological role, decapping enzyme for NAD-capped RNAs: specifically hydrolyzes the nicotinamide adenine dinucleotide (NAD) cap from a subset of RNAs by removing the entire NAD moiety from the 5'-end of an NAD-capped RNA. The NAD-cap is present at the 5'-end of some RNAs and snoRNAs. In contrast to the canonical 5'-end N7 methylguanosine (m7G) cap, the NAD cap promotes mRNA decay. Also acts as a non-canonical decapping enzyme that removes the entire cap structure of m7G capped or incompletely capped RNAs. Has decapping activity toward incomplete 5'-end m7G cap mRNAs such as unmethylated 5'-end-capped RNA (cap0), while it has no activity toward 2'-O-ribose methylated m7G cap (cap1). Also possesses RNA 5'-pyrophosphohydrolase activity by hydrolyzing the 5'-end triphosphate to release pyrophosphates. Stimulates exoribonuclease activity of Rat1, allowing it to degrade RNAs with stable secondary structure more effectively. This Candida albicans (strain SC5314 / ATCC MYA-2876) (Yeast) protein is Decapping nuclease RAI1.